The primary structure comprises 195 residues: Phosphoheptose isomerase (195 aa).

An SIS domain is found at 35–195; that stretch reads LCVALYRGDK…EKEIFGDGVN (161 aa). 51–53 provides a ligand contact to substrate; it reads NGG. Residues His-60 and Glu-64 each contribute to the Zn(2+) site. Substrate contacts are provided by residues Glu-64, 93-94, 119-121, Ser-124, and Gln-171; these read ND and STS. Zn(2+) contacts are provided by Gln-171 and His-179.

It belongs to the SIS family. GmhA subfamily. As to quaternary structure, homotetramer. It depends on Zn(2+) as a cofactor.

The protein resides in the cytoplasm. The catalysed reaction is 2 D-sedoheptulose 7-phosphate = D-glycero-alpha-D-manno-heptose 7-phosphate + D-glycero-beta-D-manno-heptose 7-phosphate. It functions in the pathway carbohydrate biosynthesis; D-glycero-D-manno-heptose 7-phosphate biosynthesis; D-glycero-alpha-D-manno-heptose 7-phosphate and D-glycero-beta-D-manno-heptose 7-phosphate from sedoheptulose 7-phosphate: step 1/1. Functionally, catalyzes the isomerization of sedoheptulose 7-phosphate in D-glycero-D-manno-heptose 7-phosphate. The polypeptide is Phosphoheptose isomerase (Sulfurimonas denitrificans (strain ATCC 33889 / DSM 1251) (Thiomicrospira denitrificans (strain ATCC 33889 / DSM 1251))).